Here is a 591-residue protein sequence, read N- to C-terminus: Pyruvate kinase 2 (591 aa).

R38 is a binding site for substrate. N40, S42, and D72 together coordinate K(+). 40–43 (NFSH) lines the ATP pocket. R79 and K164 together coordinate ATP. E229 provides a ligand contact to Mg(2+). Substrate is bound by residues G252, D253, and T285. D253 provides a ligand contact to Mg(2+).

The protein belongs to the pyruvate kinase family. In the C-terminal section; belongs to the PEP-utilizing enzyme family. In terms of assembly, homotetramer. It depends on Mg(2+) as a cofactor. K(+) serves as cofactor.

It catalyses the reaction pyruvate + ATP = phosphoenolpyruvate + ADP + H(+). It functions in the pathway carbohydrate degradation; glycolysis; pyruvate from D-glyceraldehyde 3-phosphate: step 5/5. The polypeptide is Pyruvate kinase 2 (pyk2) (Synechocystis sp. (strain ATCC 27184 / PCC 6803 / Kazusa)).